Reading from the N-terminus, the 235-residue chain is TIR domain-containing adapter molecule 2 (235 aa).

Residues 1–39 are disordered; sequence MGIGKSKINSCPLSLSWGKRHSVDTSPGYHESDSKKSED. Residue Gly-2 is the site of N-myristoyl glycine attachment. At Ser-16 the chain carries Phosphoserine; by PKC/PRKCE. A compositionally biased stretch (basic and acidic residues) spans 30–39; the sequence is HESDSKKSED. Positions 73 to 229 constitute a TIR domain; that stretch reads AEEEVFLKFV…TIWKETRNMV (157 aa). Tyr-167 is modified (phosphotyrosine).

As to quaternary structure, homodimer. Interacts with TLR4, TICAM1, IRF3 and IRF7 in response to LPS. Interacts with IL1R1, IL1RAP, IRAK2, IRAK3 and TRAF6. Interacts with protein kinase-inactive mutants of IRAK1 and IRAK4. Isoform 1 interacts with isoform 2; the interaction occurs in late endosomes and disrupts the interaction between isoform 1 and TICAM1. Interacts with MYD88; the interaction decreases after IL-18 stimulation in a time-dependent manner. Interacts with IL18R1 and IL18RAP. Interacts with TLR2. Interacts with RAB11FIP2. Post-translationally, phosphorylated by PRKCE in response to LPS. Phosphorylation is essential for its function. It is depleted from the membrane upon phosphorylation. Tyrosine phosphorylation is inhibited by phosphatase PTPN4. In terms of processing, isoform 1 is myristoylated. Required for membrane association which is critical for its ability to initiate efficient signaling. Expressed in spleen, prostate, testis, uterus, small intestine, colon, peripheral blood leukocytes, heart, placenta, lung, liver, skeletal muscle, and pancreas Isoform 2 is ubiquitously expressed (at lower levels than isoform 1).

It is found in the cytoplasm. Its subcellular location is the golgi apparatus. It localises to the cell membrane. The protein resides in the endoplasmic reticulum. The protein localises to the early endosome membrane. It is found in the late endosome membrane. Its subcellular location is the cell projection. It localises to the phagocytic cup. Functions as a sorting adapter in different signaling pathways to facilitate downstream signaling leading to type I interferon induction. In TLR4 signaling, physically bridges TLR4 and TICAM1 and functionally transmits signal to TICAM1 in early endosomes after endocytosis of TLR4. In TLR2 signaling, physically bridges TLR2 and MYD88 and is required for the TLR2-dependent movement of MYD88 to endosomes following ligand engagement. Involved in IL-18 signaling and is proposed to function as a sorting adapter for MYD88 in IL-18 signaling during adaptive immune response. Forms a complex with RAB11FIP2 that is recruited to the phagosomes to promote the activation of the actin-regulatory GTPases RAC1 and CDC42 and subsequent phagocytosis of Gram-negative bacteria. Functionally, proposed to inhibit LPS-TLR4 signaling at the late endosome by interaction with isoform 1 thereby disrupting the association of isoform 1 with TICAM1. May be involved in TLR4 degradation in late endosomes. The chain is TIR domain-containing adapter molecule 2 (TICAM2) from Homo sapiens (Human).